The primary structure comprises 72 residues: DNA-directed RNA polymerase subunit omega (72 aa).

This sequence belongs to the RNA polymerase subunit omega family. As to quaternary structure, the RNAP catalytic core consists of 2 alpha, 1 beta, 1 beta' and 1 omega subunit. When a sigma factor is associated with the core the holoenzyme is formed, which can initiate transcription.

It carries out the reaction RNA(n) + a ribonucleoside 5'-triphosphate = RNA(n+1) + diphosphate. Its function is as follows. Promotes RNA polymerase assembly. Latches the N- and C-terminal regions of the beta' subunit thereby facilitating its interaction with the beta and alpha subunits. The protein is DNA-directed RNA polymerase subunit omega of Clostridium kluyveri (strain NBRC 12016).